Reading from the N-terminus, the 295-residue chain is Giardin subunit alpha-1 (295 aa).

Annexin repeat units lie at residues 2-71 (PKVT…MDLF), 73-143 (DRHE…MEKW), 153-223 (GSPE…AHFA), and 226-293 (GMHR…TLWR).

This sequence belongs to the annexin family. Giardin subunit alpha subfamily.

It is found in the cytoplasm. The protein localises to the cytoskeleton. Functionally, giardins are involved in parasite attachment to the intestinal mucosa and in the cytoskeletal disassembly and reassembly that marks the transition from infectious trophozoite to transmissible cyst. They may interact with other cytoskeletal proteins such as microtubules in the microribbons or crossbridges, to maintain the integrity of the ventral disk. This Giardia intestinalis (Giardia lamblia) protein is Giardin subunit alpha-1.